Here is a 300-residue protein sequence, read N- to C-terminus: Ribosomal protein bS6--L-glutamate ligase (300 aa).

One can recognise an ATP-grasp domain in the interval 104–287 (MQLLARQGID…IAGKMIRWIE (184 aa)). ATP-binding positions include Lys-141, 178–179 (EY), Asp-187, and 211–213 (RSN). Positions 248, 260, and 262 each coordinate Mg(2+). Asp-248, Glu-260, and Asn-262 together coordinate Mn(2+).

This sequence belongs to the RimK family. Requires Mg(2+) as cofactor. Mn(2+) is required as a cofactor.

In terms of biological role, an L-glutamate ligase that catalyzes the ATP-dependent post-translational addition of glutamate residues to the C-terminus of ribosomal protein bS6 (RpsF). Is also able to catalyze the synthesis of poly-alpha-glutamate in vitro, via ATP hydrolysis from unprotected glutamate as substrate. The number of glutamate residues added to either RpsF or to poly-alpha-glutamate changes with pH. The sequence is that of Ribosomal protein bS6--L-glutamate ligase from Shigella boydii serotype 18 (strain CDC 3083-94 / BS512).